Here is a 239-residue protein sequence, read N- to C-terminus: tRNA (guanine-N(1)-)-methyltransferase (239 aa).

S-adenosyl-L-methionine is bound by residues Gly-110 and 129–134; that span reads LGDFVL.

This sequence belongs to the RNA methyltransferase TrmD family. As to quaternary structure, homodimer.

The protein localises to the cytoplasm. The catalysed reaction is guanosine(37) in tRNA + S-adenosyl-L-methionine = N(1)-methylguanosine(37) in tRNA + S-adenosyl-L-homocysteine + H(+). Its function is as follows. Specifically methylates guanosine-37 in various tRNAs. This is tRNA (guanine-N(1)-)-methyltransferase from Clostridium beijerinckii (strain ATCC 51743 / NCIMB 8052) (Clostridium acetobutylicum).